Consider the following 521-residue polypeptide: GMP synthase [glutamine-hydrolyzing] (521 aa).

A Glutamine amidotransferase type-1 domain is found at 5–197 (KILILDFGSQ…VLDICGAQPG (193 aa)). The Nucleophile role is filled by cysteine 81. Residues histidine 171 and glutamate 173 contribute to the active site. The region spanning 198–390 (WTMPNYIEEA…LGLPREMVYR (193 aa)) is the GMPS ATP-PPase domain. An ATP-binding site is contributed by 225–231 (SGGVDSS).

Homodimer.

It catalyses the reaction XMP + L-glutamine + ATP + H2O = GMP + L-glutamate + AMP + diphosphate + 2 H(+). It participates in purine metabolism; GMP biosynthesis; GMP from XMP (L-Gln route): step 1/1. In terms of biological role, catalyzes the synthesis of GMP from XMP. This Neisseria meningitidis serogroup C (strain 053442) protein is GMP synthase [glutamine-hydrolyzing].